We begin with the raw amino-acid sequence, 554 residues long: CTP synthase (554 aa).

Residues 1–265 (MTPLIFVTGG…DELVIEQFKL (265 aa)) are amidoligase domain. Ser-13 provides a ligand contact to CTP. Ser-13 contacts UTP. ATP contacts are provided by residues 14–19 (SLGKGI) and Asp-71. Asp-71 and Glu-139 together coordinate Mg(2+). Residues 146–148 (DIE), 186–191 (KTKPTQ), and Lys-222 contribute to the CTP site. UTP-binding positions include 186–191 (KTKPTQ) and Lys-222. Residues 292–545 (NIAVVGKYVD…VRAAREKKAG (254 aa)) form the Glutamine amidotransferase type-1 domain. Gly-353 serves as a coordination point for L-glutamine. Catalysis depends on Cys-380, which acts as the Nucleophile; for glutamine hydrolysis. L-glutamine-binding positions include 381-384 (YGMQ), Glu-404, and Arg-471. Active-site residues include His-518 and Glu-520.

This sequence belongs to the CTP synthase family. As to quaternary structure, homotetramer.

It carries out the reaction UTP + L-glutamine + ATP + H2O = CTP + L-glutamate + ADP + phosphate + 2 H(+). The enzyme catalyses L-glutamine + H2O = L-glutamate + NH4(+). It catalyses the reaction UTP + NH4(+) + ATP = CTP + ADP + phosphate + 2 H(+). Its pathway is pyrimidine metabolism; CTP biosynthesis via de novo pathway; CTP from UDP: step 2/2. With respect to regulation, allosterically activated by GTP, when glutamine is the substrate; GTP has no effect on the reaction when ammonia is the substrate. The allosteric effector GTP functions by stabilizing the protein conformation that binds the tetrahedral intermediate(s) formed during glutamine hydrolysis. Inhibited by the product CTP, via allosteric rather than competitive inhibition. In terms of biological role, catalyzes the ATP-dependent amination of UTP to CTP with either L-glutamine or ammonia as the source of nitrogen. Regulates intracellular CTP levels through interactions with the four ribonucleotide triphosphates. The sequence is that of CTP synthase from Xanthomonas euvesicatoria pv. vesicatoria (strain 85-10) (Xanthomonas campestris pv. vesicatoria).